Reading from the N-terminus, the 178-residue chain is ATP-dependent protease subunit HslV (178 aa).

Thr5 is an active-site residue. Na(+) contacts are provided by Ser161, Cys164, and Thr167.

This sequence belongs to the peptidase T1B family. HslV subfamily. In terms of assembly, a double ring-shaped homohexamer of HslV is capped on each side by a ring-shaped HslU homohexamer. The assembly of the HslU/HslV complex is dependent on binding of ATP.

The protein localises to the cytoplasm. It catalyses the reaction ATP-dependent cleavage of peptide bonds with broad specificity.. With respect to regulation, allosterically activated by HslU binding. Its function is as follows. Protease subunit of a proteasome-like degradation complex believed to be a general protein degrading machinery. This is ATP-dependent protease subunit HslV from Syntrophomonas wolfei subsp. wolfei (strain DSM 2245B / Goettingen).